Consider the following 522-residue polypeptide: Glutamate--cysteine ligase, chloroplastic (522 aa).

2 disulfides stabilise this stretch: Cys-186/Cys-406 and Cys-349/Cys-364.

The protein belongs to the carboxylate-amine ligase family. Glutamate--cysteine ligase type 2 subfamily. In terms of assembly, homodimer or monomer when oxidized or reduced, respectively. The Cys-186-Cys-406 disulfide bridge is known to modulate the enzyme activity according to the redox status. The oxidized form constitutes the active enzyme. Abundant in leaves and roots. Expressed to a high level in leaf trichomes of mature plant.

The protein localises to the plastid. The protein resides in the chloroplast. The catalysed reaction is L-cysteine + L-glutamate + ATP = gamma-L-glutamyl-L-cysteine + ADP + phosphate + H(+). It participates in sulfur metabolism; glutathione biosynthesis; glutathione from L-cysteine and L-glutamate: step 1/2. With respect to regulation, feedback inhibition by glutathione. Inhibited by buthionine sulfoximine and cystamine. Functionally, seems to play an important role in controlling the expression of resistance responses like the regulation of salicylic acid (SA) and phytoalexin (camalexin) production. Involved in resistance to fungal and bacterial pathogens. Required for the regulation of cell proliferation in root apical meristems through the GSH-dependent developmental pathway. Also participates in the detoxification process, the antioxidant response and is essential for embryo development and proper seed maturation. The chain is Glutamate--cysteine ligase, chloroplastic (GSH1) from Arabidopsis thaliana (Mouse-ear cress).